The primary structure comprises 381 residues: Sulfate adenylyltransferase (381 aa).

This sequence belongs to the sulfate adenylyltransferase family.

The catalysed reaction is sulfate + ATP + H(+) = adenosine 5'-phosphosulfate + diphosphate. Its pathway is sulfur metabolism; hydrogen sulfide biosynthesis; sulfite from sulfate: step 1/3. This is Sulfate adenylyltransferase from Carboxydothermus hydrogenoformans (strain ATCC BAA-161 / DSM 6008 / Z-2901).